Reading from the N-terminus, the 375-residue chain is Phosphate acyltransferase (375 aa).

Residues 354 to 375 (AQDDATSADADAPGDSETGSTN) are disordered. Over residues 356–368 (DDATSADADAPGD) the composition is skewed to low complexity.

The protein belongs to the PlsX family. Homodimer. Probably interacts with PlsY.

The protein resides in the cytoplasm. It catalyses the reaction a fatty acyl-[ACP] + phosphate = an acyl phosphate + holo-[ACP]. It functions in the pathway lipid metabolism; phospholipid metabolism. Catalyzes the reversible formation of acyl-phosphate (acyl-PO(4)) from acyl-[acyl-carrier-protein] (acyl-ACP). This enzyme utilizes acyl-ACP as fatty acyl donor, but not acyl-CoA. The chain is Phosphate acyltransferase from Ruegeria sp. (strain TM1040) (Silicibacter sp.).